The chain runs to 97 residues: MEIKTTAVAGTLESSDIQIMISKGSNGIEIDLESEVKKAYGDQIEKVITETLKKYGLENAKVKATDKGALDCVIKARTLAVAQRATETQDKPDLEVL.

Residue Ser-14 is modified to O-(phosphoribosyl dephospho-coenzyme A)serine.

Belongs to the CitD family. Oligomer with a subunit composition of (alpha,beta,gamma)6.

The protein resides in the cytoplasm. Covalent carrier of the coenzyme of citrate lyase. The chain is Citrate lyase acyl carrier protein from Lactobacillus helveticus (strain DPC 4571).